The primary structure comprises 156 residues: Transcription antitermination protein NusB (156 aa).

The protein belongs to the NusB family.

Functionally, involved in transcription antitermination. Required for transcription of ribosomal RNA (rRNA) genes. Binds specifically to the boxA antiterminator sequence of the ribosomal RNA (rrn) operons. In Vibrio cholerae serotype O1 (strain ATCC 39541 / Classical Ogawa 395 / O395), this protein is Transcription antitermination protein NusB.